A 297-amino-acid polypeptide reads, in one-letter code: Small ribosomal subunit protein uS2 (297 aa).

Residues 252 to 297 form a disordered region; it reads GVPGTAFSAATAAPTSWEADGGDWAASSAAPAGESWAETQPAEAKW. A compositionally biased stretch (low complexity) spans 256–289; the sequence is TAFSAATAAPTSWEADGGDWAASSAAPAGESWAE.

It belongs to the universal ribosomal protein uS2 family. Component of the small ribosomal subunit. Mature ribosomes consist of a small (40S) and a large (60S) subunit. The 40S subunit contains about 33 different proteins and 1 molecule of RNA (18S). The 60S subunit contains about 49 different proteins and 3 molecules of RNA (25S, 5.8S and 5S). Interacts with rps21.

The protein localises to the cytoplasm. In terms of biological role, required for the assembly and/or stability of the 40S ribosomal subunit. Required for the processing of the 20S rRNA-precursor to mature 18S rRNA in a late step of the maturation of 40S ribosomal subunits. In Aspergillus fumigatus (strain CBS 144.89 / FGSC A1163 / CEA10) (Neosartorya fumigata), this protein is Small ribosomal subunit protein uS2 (rps0).